We begin with the raw amino-acid sequence, 516 residues long: Glycosyl hydrolase family 109 protein 4 (516 aa).

A signal peptide spans 1–18; it reads MKKIKLLLVAGACVVLSA. A lipid anchor (N-palmitoyl cysteine) is attached at Cys-19. The S-diacylglycerol cysteine moiety is linked to residue Cys-19. NAD(+)-binding positions include 76–77, Asp-98, 146–149, 166–167, and Asn-195; these read MR, WLHH, and EV. Substrate contacts are provided by residues Tyr-224, Arg-247, 259-262, and Tyr-337; that span reads YATH. Residue Tyr-259 coordinates NAD(+).

This sequence belongs to the Gfo/Idh/MocA family. Glycosyl hydrolase 109 subfamily. The cofactor is NAD(+).

It is found in the cell membrane. Functionally, glycosidase. The sequence is that of Glycosyl hydrolase family 109 protein 4 from Phocaeicola vulgatus (strain ATCC 8482 / DSM 1447 / JCM 5826 / CCUG 4940 / NBRC 14291 / NCTC 11154) (Bacteroides vulgatus).